The following is a 487-amino-acid chain: Serine/threonine-protein phosphatase 2A activator 1 (487 aa).

Disordered stretches follow at residues 1 to 28 (MPMI…SSST) and 426 to 487 (GGIQ…PKPE).

This sequence belongs to the PTPA-type PPIase family.

The protein localises to the cytoplasm. It is found in the nucleus. The catalysed reaction is [protein]-peptidylproline (omega=180) = [protein]-peptidylproline (omega=0). In terms of biological role, PPIases accelerate the folding of proteins. It catalyzes the cis-trans isomerization of proline imidic peptide bonds in oligopeptides. Acts as a regulatory subunit for PP2A-like phosphatases modulating their activity or substrate specificity, probably by inducing a conformational change in the catalytic subunit, a direct target of the PPIase. Can reactivate inactive phosphatase PP2A-phosphatase methylesterase complexes (PP2Ai) in presence of ATP and Mg(2+) by dissociating the inactive form from the complex. In Mycosarcoma maydis (Corn smut fungus), this protein is Serine/threonine-protein phosphatase 2A activator 1 (RRD1).